The sequence spans 85 residues: UPF0291 protein SAK_0343 (85 aa).

A disordered region spans residues 58–85; that stretch reads GNDVTPEKLRQVQREKGLHGRSLDDPNS. Basic and acidic residues predominate over residues 62–85; sequence TPEKLRQVQREKGLHGRSLDDPNS.

The protein belongs to the UPF0291 family.

The protein localises to the cytoplasm. The chain is UPF0291 protein SAK_0343 from Streptococcus agalactiae serotype Ia (strain ATCC 27591 / A909 / CDC SS700).